The chain runs to 131 residues: Small ribosomal subunit protein uS8 (131 aa).

This sequence belongs to the universal ribosomal protein uS8 family. In terms of assembly, part of the 30S ribosomal subunit. Contacts proteins S5 and S12.

One of the primary rRNA binding proteins, it binds directly to 16S rRNA central domain where it helps coordinate assembly of the platform of the 30S subunit. The polypeptide is Small ribosomal subunit protein uS8 (Legionella pneumophila (strain Paris)).